Consider the following 883-residue polypeptide: Alanine--tRNA ligase (883 aa).

Zn(2+) is bound by residues His563, His567, Cys677, and His681.

The protein belongs to the class-II aminoacyl-tRNA synthetase family. Zn(2+) is required as a cofactor.

It is found in the cytoplasm. The catalysed reaction is tRNA(Ala) + L-alanine + ATP = L-alanyl-tRNA(Ala) + AMP + diphosphate. In terms of biological role, catalyzes the attachment of alanine to tRNA(Ala) in a two-step reaction: alanine is first activated by ATP to form Ala-AMP and then transferred to the acceptor end of tRNA(Ala). Also edits incorrectly charged Ser-tRNA(Ala) and Gly-tRNA(Ala) via its editing domain. In Cereibacter sphaeroides (strain ATCC 17023 / DSM 158 / JCM 6121 / CCUG 31486 / LMG 2827 / NBRC 12203 / NCIMB 8253 / ATH 2.4.1.) (Rhodobacter sphaeroides), this protein is Alanine--tRNA ligase.